The primary structure comprises 76 residues: UPF0346 protein lhv_1069 (76 aa).

The protein belongs to the UPF0346 family.

In Lactobacillus helveticus (strain DPC 4571), this protein is UPF0346 protein lhv_1069.